The following is a 96-amino-acid chain: MEQAPEDQGPQREPHNEWTLELLEELKNEAVRHFPRIWLHGLGQHIYETYGDTWAGVEAIIRILQQLLFIHFRIGCRHSRIGVTQQRRARNGASRS.

The segment at M1–L42 is homooligomerization. 3 positions are modified to phosphoserine; by host: S79, S94, and S96.

Belongs to the HIV-1 VPR protein family. As to quaternary structure, homooligomer, may form homodimer. Interacts with p6-gag region of the Pr55 Gag precursor protein through a (Leu-X-X)4 motif near the C-terminus of the P6gag protein. Interacts with host UNG. May interact with host RAD23A/HHR23A. Interacts with host VPRBP/DCAF1, leading to hijack the CUL4A-RBX1-DDB1-DCAF1/VPRBP complex, mediating ubiquitination of host proteins such as TERT and ZGPAT and arrest of the cell cycle in G2 phase. Phosphorylated on several residues by host. These phosphorylations regulate VPR activity for the nuclear import of the HIV-1 pre-integration complex.

The protein localises to the virion. It is found in the host nucleus. Its subcellular location is the host extracellular space. Its function is as follows. During virus entry, plays a role in the transport of the viral pre-integration (PIC) complex to the host nucleus. This function is crucial for viral infection of non-dividing macrophages. May act directly at the nuclear pore complex, by binding nucleoporins phenylalanine-glycine (FG)-repeat regions. During virus replication, may deplete host UNG protein, and incude G2-M cell cycle arrest. Acts by targeting specific host proteins for degradation by the 26S proteasome, through association with the cellular CUL4A-DDB1 E3 ligase complex by direct interaction with host VPRPB/DCAF-1. Cell cycle arrest reportedly occurs within hours of infection and is not blocked by antiviral agents, suggesting that it is initiated by the VPR carried into the virion. Additionally, VPR induces apoptosis in a cell cycle dependent manner suggesting that these two effects are mechanistically linked. Detected in the serum and cerebrospinal fluid of AIDS patient, VPR may also induce cell death to bystander cells. The chain is Protein Vpr from Human immunodeficiency virus type 1 group M subtype B (isolate BRU/LAI) (HIV-1).